Reading from the N-terminus, the 326-residue chain is uncharacterized protein (326 aa).

Residue 28–35 (GPINSGKT) participates in ATP binding.

This sequence belongs to the archaeal ATPase family.

This is an uncharacterized protein from Pyrococcus abyssi (strain GE5 / Orsay).